A 421-amino-acid polypeptide reads, in one-letter code: Imidazolonepropionase (421 aa).

Residues H81 and H83 each coordinate Fe(3+). Zn(2+)-binding residues include H81 and H83. 4-imidazolone-5-propanoate is bound by residues R90, Y153, and H186. Residue Y153 coordinates N-formimidoyl-L-glutamate. Fe(3+) is bound at residue H251. H251 serves as a coordination point for Zn(2+). E254 provides a ligand contact to 4-imidazolone-5-propanoate. Residue D326 participates in Fe(3+) binding. Zn(2+) is bound at residue D326. The N-formimidoyl-L-glutamate site is built by N328 and G330. A 4-imidazolone-5-propanoate-binding site is contributed by S331.

This sequence belongs to the metallo-dependent hydrolases superfamily. HutI family. It depends on Zn(2+) as a cofactor. Fe(3+) serves as cofactor.

It localises to the cytoplasm. The catalysed reaction is 4-imidazolone-5-propanoate + H2O = N-formimidoyl-L-glutamate. It functions in the pathway amino-acid degradation; L-histidine degradation into L-glutamate; N-formimidoyl-L-glutamate from L-histidine: step 3/3. Its function is as follows. Catalyzes the hydrolytic cleavage of the carbon-nitrogen bond in imidazolone-5-propanoate to yield N-formimidoyl-L-glutamate. It is the third step in the universal histidine degradation pathway. This is Imidazolonepropionase from Streptococcus pyogenes serotype M3 (strain SSI-1).